We begin with the raw amino-acid sequence, 159 residues long: Ribosome maturation factor RimP (159 aa).

Belongs to the RimP family.

It is found in the cytoplasm. Required for maturation of 30S ribosomal subunits. This chain is Ribosome maturation factor RimP, found in Geobacter metallireducens (strain ATCC 53774 / DSM 7210 / GS-15).